The primary structure comprises 517 residues: Crotonobetaine/carnitine--CoA ligase (517 aa).

It belongs to the ATP-dependent AMP-binding enzyme family.

The enzyme catalyses 4-(trimethylamino)butanoate + ATP + CoA = 4-(trimethylamino)butanoyl-CoA + AMP + diphosphate. It catalyses the reaction crotonobetaine + ATP + CoA = crotonobetainyl-CoA + AMP + diphosphate. It carries out the reaction (R)-carnitine + ATP + CoA = (R)-carnitinyl-CoA + AMP + diphosphate. Its pathway is amine and polyamine metabolism; carnitine metabolism. Its function is as follows. Catalyzes the transfer of CoA to carnitine, generating the initial carnitinyl-CoA needed for the CaiB reaction cycle. Also has activity toward crotonobetaine and gamma-butyrobetaine. This chain is Crotonobetaine/carnitine--CoA ligase, found in Shigella sonnei (strain Ss046).